The sequence spans 405 residues: Probable tRNA sulfurtransferase (405 aa).

Positions 60 to 165 (DAVINRLKKV…SNGIFLTSEV (106 aa)) constitute a THUMP domain. Residues 183-184 (ML), 208-209 (HF), R265, G287, and Q296 each bind ATP.

The protein belongs to the ThiI family.

The protein localises to the cytoplasm. It catalyses the reaction [ThiI sulfur-carrier protein]-S-sulfanyl-L-cysteine + a uridine in tRNA + 2 reduced [2Fe-2S]-[ferredoxin] + ATP + H(+) = [ThiI sulfur-carrier protein]-L-cysteine + a 4-thiouridine in tRNA + 2 oxidized [2Fe-2S]-[ferredoxin] + AMP + diphosphate. The enzyme catalyses [ThiS sulfur-carrier protein]-C-terminal Gly-Gly-AMP + S-sulfanyl-L-cysteinyl-[cysteine desulfurase] + AH2 = [ThiS sulfur-carrier protein]-C-terminal-Gly-aminoethanethioate + L-cysteinyl-[cysteine desulfurase] + A + AMP + 2 H(+). It functions in the pathway cofactor biosynthesis; thiamine diphosphate biosynthesis. Its function is as follows. Catalyzes the ATP-dependent transfer of a sulfur to tRNA to produce 4-thiouridine in position 8 of tRNAs, which functions as a near-UV photosensor. Also catalyzes the transfer of sulfur to the sulfur carrier protein ThiS, forming ThiS-thiocarboxylate. This is a step in the synthesis of thiazole, in the thiamine biosynthesis pathway. The sulfur is donated as persulfide by IscS. The sequence is that of Probable tRNA sulfurtransferase from Pediococcus pentosaceus (strain ATCC 25745 / CCUG 21536 / LMG 10740 / 183-1w).